Reading from the N-terminus, the 527-residue chain is Glutamate--cysteine ligase (527 aa).

It belongs to the glutamate--cysteine ligase type 1 family. Type 1 subfamily.

The enzyme catalyses L-cysteine + L-glutamate + ATP = gamma-L-glutamyl-L-cysteine + ADP + phosphate + H(+). The protein operates within sulfur metabolism; glutathione biosynthesis; glutathione from L-cysteine and L-glutamate: step 1/2. This chain is Glutamate--cysteine ligase, found in Pseudomonas aeruginosa (strain UCBPP-PA14).